A 234-amino-acid polypeptide reads, in one-letter code: Lipoprotein-releasing system ATP-binding protein LolD (234 aa).

The region spanning 13–233 is the ABC transporter domain; it reads IYLHEIKRQY…SLSDGQVVEL (221 aa). 49–56 lines the ATP pocket; sequence APSGSGKS.

It belongs to the ABC transporter superfamily. Lipoprotein translocase (TC 3.A.1.125) family. The complex is composed of two ATP-binding proteins (LolD) and two transmembrane proteins (LolC and LolE).

The protein resides in the cell inner membrane. In terms of biological role, part of the ABC transporter complex LolCDE involved in the translocation of mature outer membrane-directed lipoproteins, from the inner membrane to the periplasmic chaperone, LolA. Responsible for the formation of the LolA-lipoprotein complex in an ATP-dependent manner. The sequence is that of Lipoprotein-releasing system ATP-binding protein LolD from Bradyrhizobium diazoefficiens (strain JCM 10833 / BCRC 13528 / IAM 13628 / NBRC 14792 / USDA 110).